Here is a 452-residue protein sequence, read N- to C-terminus: Tubulin alpha-1 chain (452 aa).

Position 11 (Gln-11) interacts with GTP. Lys-40 carries the N6-acetyllysine modification. GTP contacts are provided by Glu-71, Ser-140, Gly-144, Thr-145, Thr-179, Asn-206, and Asn-228. Glu-71 lines the Mg(2+) pocket. The active site involves Glu-254. Residues Glu-433–Tyr-452 are disordered.

This sequence belongs to the tubulin family. In terms of assembly, dimer of alpha and beta chains. A typical microtubule is a hollow water-filled tube with an outer diameter of 25 nm and an inner diameter of 15 nM. Alpha-beta heterodimers associate head-to-tail to form protofilaments running lengthwise along the microtubule wall with the beta-tubulin subunit facing the microtubule plus end conferring a structural polarity. Microtubules usually have 13 protofilaments but different protofilament numbers can be found in some organisms and specialized cells. Mg(2+) serves as cofactor. In terms of processing, undergoes a tyrosination/detyrosination cycle, the cyclic removal and re-addition of a C-terminal tyrosine residue by the enzymes tubulin tyrosine carboxypeptidase (TTCP) and tubulin tyrosine ligase (TTL), respectively. Post-translationally, acetylation of alpha chains at Lys-40 stabilizes microtubules and affects affinity and processivity of microtubule motors. This modification has a role in multiple cellular functions, ranging from cell motility, cell cycle progression or cell differentiation to intracellular trafficking and signaling.

The protein resides in the cytoplasm. It is found in the cytoskeleton. It carries out the reaction GTP + H2O = GDP + phosphate + H(+). Functionally, tubulin is the major constituent of microtubules, a cylinder consisting of laterally associated linear protofilaments composed of alpha- and beta-tubulin heterodimers. Microtubules grow by the addition of GTP-tubulin dimers to the microtubule end, where a stabilizing cap forms. Below the cap, tubulin dimers are in GDP-bound state, owing to GTPase activity of alpha-tubulin. The protein is Tubulin alpha-1 chain of Paracentrotus lividus (Common sea urchin).